The sequence spans 436 residues: MLILSIGLIHHTSNKSLYTISPNKGKRYEPFTTTSLGNFQFHVVRFLHRLIYGTQRYQELFPPIQKIKNINNVKQQRIFPVNCAADDLDLGFGESDQIELFNHPSKDTYGQFNLIQLIDIFDPPQVHAPSSADEFFKSNKGSEHIDIFDMITRQPPPFHQHQLNIETPYFEDFATPLVLPPHEVSSDDVESYFSGSVSTVSSIEPLDDEFVPPPQPPRTHTSRKRKHDSISPPASSDSSSSSSYVPQLIPSSSSSVTSNGDSPVSPTTKRKYTKKKQPVFSNVDEPIVITTTTKTNNIDVKKITTTKNGTVENRFDCPSCDASFKVKGYLTRHLKKHSTSKAFECPFFDNHGVHGSKCHPTGGFSRRDTFKVHLRALHFIYPAGVKASQRNSFNGRCAGCFQYFDNNSEWLENHIEAGKCTGTVQYKQNVSNLLLD.

The tract at residues 204–277 (EPLDDEFVPP…TKRKYTKKKQ (74 aa)) is disordered. Residues 230–265 (ISPPASSDSSSSSSYVPQLIPSSSSSVTSNGDSPVS) show a composition bias toward low complexity. Residues 268–277 (TKRKYTKKKQ) are compositionally biased toward basic residues. Residues 315–337 (FDCPSCDASFKVKGYLTRHLKKH) form a C2H2-type zinc finger.

In terms of processing, activated by the amino acid-induced proteolytic removal of an N-terminal inhibitory domain.

The protein resides in the cell membrane. The protein localises to the nucleus. In terms of biological role, transcription factor that activates genes required for degradation of extracellular protein and uptake of peptides such as the secreted aspartyl protease SAP2 or the oligopeptide transporter OPT1. Required for virulence. Synthesized as latent cytoplasmic precursor, which, upon a signal initiated by the plasma membrane SPS amino acid sensor system (including CSY1 and CSH3), becomes proteolytically activated and relocates to the nucleus, where it induces the expression of SPS-sensor-regulated genes. This Candida albicans (strain SC5314 / ATCC MYA-2876) (Yeast) protein is Transcriptional regulator STP3 (STP3).